Reading from the N-terminus, the 263-residue chain is Probable methylthioribulose-1-phosphate dehydratase (263 aa).

C102 is a binding site for substrate. The Zn(2+) site is built by H120 and H122. The active-site Proton donor/acceptor is the E144. H200 contacts Zn(2+).

It belongs to the aldolase class II family. MtnB subfamily. Requires Zn(2+) as cofactor.

The protein localises to the cytoplasm. It catalyses the reaction 5-(methylsulfanyl)-D-ribulose 1-phosphate = 5-methylsulfanyl-2,3-dioxopentyl phosphate + H2O. Its pathway is amino-acid biosynthesis; L-methionine biosynthesis via salvage pathway; L-methionine from S-methyl-5-thio-alpha-D-ribose 1-phosphate: step 2/6. In terms of biological role, catalyzes the dehydration of methylthioribulose-1-phosphate (MTRu-1-P) into 2,3-diketo-5-methylthiopentyl-1-phosphate (DK-MTP-1-P). This Caenorhabditis elegans protein is Probable methylthioribulose-1-phosphate dehydratase.